The following is a 25-amino-acid chain: C-type natriuretic peptide (25 aa).

Cysteine 9 and cysteine 25 are disulfide-bonded.

As to expression, venom gland.

It is found in the secreted. Functionally, snake venom natriuretic peptide that has a vasorelaxant activity in rat aortic strips and a diuretic potency in anesthetized rats. May act by activating natriuretic receptors (NPR1 and/or NPR2). This is C-type natriuretic peptide from Crotalus atrox (Western diamondback rattlesnake).